The sequence spans 432 residues: Adenylosuccinate synthetase (432 aa).

Residues 13 to 19 and 41 to 43 each bind GTP; these read GDEGKGK and GHT. D14 serves as the catalytic Proton acceptor. Positions 14 and 41 each coordinate Mg(2+). Residues 14-17, 39-42, T130, R144, Q225, T240, and R304 each bind IMP; these read DEGK and NAGH. The active-site Proton donor is H42. Substrate is bound at residue 300-306; that stretch reads ATTGRRR. GTP is bound by residues R306, 332-334, and 414-416; these read KLD and STG.

This sequence belongs to the adenylosuccinate synthetase family. In terms of assembly, homodimer. Mg(2+) is required as a cofactor.

It localises to the cytoplasm. The enzyme catalyses IMP + L-aspartate + GTP = N(6)-(1,2-dicarboxyethyl)-AMP + GDP + phosphate + 2 H(+). Its pathway is purine metabolism; AMP biosynthesis via de novo pathway; AMP from IMP: step 1/2. Functionally, plays an important role in the de novo pathway of purine nucleotide biosynthesis. Catalyzes the first committed step in the biosynthesis of AMP from IMP. In Methylococcus capsulatus (strain ATCC 33009 / NCIMB 11132 / Bath), this protein is Adenylosuccinate synthetase.